An 850-amino-acid polypeptide reads, in one-letter code: MEPERKGLSLASSSDGDGREENKLKQGISQDLASSSRLDRYKIARQLTEKAIKEKKIFSIYGHYPVVRAALRRKGWVEKKFHFLPKVIPDVEDEGARVNDDTCAKVKENQEMALEKTDNIHDVMSRLVKNEMPYLLWTIKRDIIDYHSLTYDQMLNHYAKTASFTTKIGLCVNMRSLPWYVPANPDSFFPRCYSLCTESEQQEFLEDFRRTMASSILKWVVSHQSCSRSSRSKPRDQREEAGSSDLSSRQDAENAEAKLRGLPGQLVDIACKVCQAYLGQLEHEDIDTSADAVEDLTEAEWEDLTQQYYSLVHGDAFISNSRNYFSQCQALLNRITSVNPQTDIDGLRNIWIIKPAAKSRGRDIVCMDRVEEILELAAADHPLSRDNKWVVQKYIETPLLICDTKFDIRQWFLVTDWNPLTIWFYKESYLRFSTQRFSLDKLDSAIHLCNNAVQKYLKNDVGRSPLLPAHNMWTSTRFQEYLQRQGRGAVWGSVIYPSMKKAIAHAMKVAQDHVEPRKNSFELYGADFVLGRDFRPWLIEINSSPTMHPSTPVTAQLCAQVQEDTIKVAVDRSCDIGNFELLWRQPVVEPPPFSGSDLCVAGVSVRRARRQVLPVCNLKASASLLDAQPLKARGPSAMPDPAQGPPSPALQRDLGLKEEKGLPLALLAPLRGAAESGGAAQPTRTKAAGKVELPACPCRHVDSQAPNTGVPVAQPAKSWDPNQLNAHPLEPVLRGLKTAEGALRPPPGGKGEGTVCSRLPHHGHHVAACQTTGTTWDGGPGVCFLRQLLASELPMGPGLPRDPRAPPCLVCRGLLPPAGPCKRCRSFCAAVLQGASFVRLGGRSCSPRTP.

Disordered regions lie at residues 1 to 29 (MEPERKGLSLASSSDGDGREENKLKQGIS) and 228 to 254 (RSSRSKPRDQREEAGSSDLSSRQDAEN). The TTL domain occupies 222–580 (SHQSCSRSSR…DRSCDIGNFE (359 aa)). ATP-binding positions include Lys354, 360-361 (RG), 392-395 (QKYI), 405-407 (KFD), and 449-450 (CN). Position 360 (Arg360) interacts with a protein. 3 residues coordinate Mg(2+): Asp527, Glu540, and Asn542. Position 540 (Glu540) interacts with ATP. A disordered region spans residues 627–652 (AQPLKARGPSAMPDPAQGPPSPALQR).

It depends on Mg(2+) as a cofactor.

It localises to the cytoplasm. The protein resides in the cytoskeleton. The protein localises to the cell projection. Its subcellular location is the cilium. It is found in the cilium axoneme. It localises to the flagellum axoneme. It carries out the reaction L-glutamyl-[protein] + glycine + ATP = glycyl-L-glutamyl-[protein] + ADP + phosphate + H(+). Its function is as follows. Monoglycylase which modifies both tubulin and non-tubulin proteins, adding a single glycine to the gamma-carboxyl groups of specific glutamate residues to generate monoglycine side chains within the C-terminal tail of target proteins. Not involved in elongation step of the polyglycylation reaction. Preferentially monoglycylates alpha-tubulin over beta-tubulin. Together with TTLL3, mediates microtubule glycylation of primary and motile cilia, which is essential for their stability and maintenance. Together with TTLL3, glycylates sperm flagella which regulates axonemal dynein motor activity, thereby controlling flagellar beat, directional sperm swimming and male fertility. Monoglycylates non-tubulin proteins such as ANP32A, ANP32B, SET, NCL and NAP1. This is Protein monoglycylase TTLL8 from Homo sapiens (Human).